A 102-amino-acid polypeptide reads, in one-letter code: Small ribosomal subunit protein uS10 (102 aa).

Belongs to the universal ribosomal protein uS10 family. As to quaternary structure, part of the 30S ribosomal subunit.

Involved in the binding of tRNA to the ribosomes. This Kineococcus radiotolerans (strain ATCC BAA-149 / DSM 14245 / SRS30216) protein is Small ribosomal subunit protein uS10.